Here is a 695-residue protein sequence, read N- to C-terminus: Elongation factor G 1 (695 aa).

The tr-type G domain occupies 5 to 280 (ARYRNIGIFA…AVVDYLPSPT (276 aa)). GTP contacts are provided by residues 14 to 21 (AHVDAGKT), 78 to 82 (DTPGH), and 132 to 135 (NKLD).

Belongs to the TRAFAC class translation factor GTPase superfamily. Classic translation factor GTPase family. EF-G/EF-2 subfamily.

Its subcellular location is the cytoplasm. Catalyzes the GTP-dependent ribosomal translocation step during translation elongation. During this step, the ribosome changes from the pre-translocational (PRE) to the post-translocational (POST) state as the newly formed A-site-bound peptidyl-tRNA and P-site-bound deacylated tRNA move to the P and E sites, respectively. Catalyzes the coordinated movement of the two tRNA molecules, the mRNA and conformational changes in the ribosome. This Pseudoalteromonas atlantica (strain T6c / ATCC BAA-1087) protein is Elongation factor G 1.